Here is a 206-residue protein sequence, read N- to C-terminus: Ras-related protein Rab-18 (206 aa).

Residues S17, G20, K21, S22, S23, D34, P35, T40, G66, K123, D125, and A152 each coordinate GTP. Residue S22 coordinates Mg(2+). Short sequence motifs (switch) lie at residues D31–F45 and D63–G80. T40 is a Mg(2+) binding site. A lipid anchor (S-palmitoyl cysteine) is attached at C199. A Cysteine methyl ester modification is found at C203. C203 carries the S-geranylgeranyl cysteine lipid modification. Positions S204–L206 are cleaved as a propeptide — removed in mature form.

The protein belongs to the small GTPase superfamily. Rab family. Requires Mg(2+) as cofactor.

Its subcellular location is the endoplasmic reticulum membrane. It is found in the golgi apparatus. The protein resides in the cis-Golgi network membrane. It localises to the lipid droplet. The protein localises to the apical cell membrane. The enzyme catalyses GTP + H2O = GDP + phosphate + H(+). Regulated by guanine nucleotide exchange factors (GEFs) which promote the exchange of bound GDP for free GTP. Regulated by GTPase activating proteins (GAPs) which increase the GTP hydrolysis activity at the ER membrane. Inhibited by GDP dissociation inhibitors (GDIs) which prevent Rab-GDP dissociation. In terms of biological role, the small GTPases Rab are key regulators of intracellular membrane trafficking, from the formation of transport vesicles to their fusion with membranes. Rabs cycle between an inactive GDP-bound form and an active GTP-bound form that is able to recruit to membranes different sets of downstream effectors directly responsible for vesicle formation, movement, tethering and fusion. RAB18 is required for the localization of ZFYVE1 to lipid droplets and for its function in mediating the formation of endoplasmic reticulum-lipid droplets (ER-LD) contacts. Also required for maintaining endoplasmic reticulum structure. Plays a role in apical endocytosis/recycling. Plays a key role in eye and brain development and neurodegeneration. The protein is Ras-related protein Rab-18 (RAB18) of Gallus gallus (Chicken).